Reading from the N-terminus, the 1179-residue chain is Calcium-activated potassium channel subunit alpha-1 (1179 aa).

The segment covering 1–24 has biased composition (gly residues); the sequence is MANGGGGGGGSSGGGGGGGGGGSG. The interval 1–62 is disordered; it reads MANGGGGGGG…SSSSSSSSSV (62 aa). Over 1–87 the chain is Extracellular; the sequence is MANGGGGGGG…VPCDSRGQRM (87 aa). Over residues 41–61 the composition is skewed to low complexity; the sequence is SSSSSSSSSSSSSSSSSSSSS. A helical transmembrane segment spans residues 88–108; the sequence is WWAFLASSMVTFFGGLFIILL. Over 109-179 the chain is Cytoplasmic; sequence WRTLKYLWTV…MISAQTLTGR (71 aa). 3 S-palmitoyl cysteine lipidation sites follow: Cys119, Cys120, and Cys122. The helical transmembrane segment at 180–200 threads the bilayer; the sequence is VLVVLVFALSIGALVIYFIDS. Residues 201-215 lie on the Extracellular side of the membrane; it reads SNPIESCQNFYKDFT. A helical transmembrane segment spans residues 216 to 236; the sequence is LQIDMAFNVFFLLYFGLRFIA. At 237–240 the chain is on the cytoplasmic side; sequence ANDK. A helical membrane pass occupies residues 241-261; it reads LWFWLEVNSVVDFFTVPPVFV. Residues 262-265 lie on the Extracellular side of the membrane; sequence SVYL. Residues 266 to 286 form a helical; Voltage-sensor membrane-spanning segment; the sequence is NRSWLGLRFLRALRLIQFSEI. The Cytoplasmic segment spans residues 287 to 301; that stretch reads LQFLNILKTSNSIKL. Residues 302 to 322 traverse the membrane as a helical segment; it reads VNLLSIFISTWLTAAGFIHLV. Residues 323–336 are Extracellular-facing; sequence ENSGDPWENFQNNQ. Positions 337–359 form an intramembrane region, pore-forming; that stretch reads ALTYWECVYLLMVTMSTVGYGDV. The Selectivity for potassium signature appears at 353 to 356; sequence TVGY. Topologically, residues 360–368 are extracellular; sequence YAKTTLGRL. Residues 369 to 389 traverse the membrane as a helical segment; sequence FMVFFILGGLAMFASYVPEII. Topologically, residues 390–1179 are cytoplasmic; that stretch reads ELIGNRKKYG…KQKYVQEERL (790 aa). The RCK N-terminal 1 domain occupies 408–550; sequence RKHIVVCGHI…WNWKEGDDAI (143 aa). Residues Glu440, Gln463, and Glu465 each coordinate Mg(2+). Residues 557–577 form a segment S7 region; that stretch reads LGFIAQSCLAQGLSTMLANLF. The segment S8 stretch occupies residues 614–634; it reads LSFPTVCELCFVKLKLLMIAI. The heme-binding motif stretch occupies residues 678–682; the sequence is CKACH. The disordered stretch occupies residues 702–730; that stretch reads EQPSTLSPKKKQRNGGMRNSPNSSPKLMR. Phosphothreonine is present on Thr706. A phosphoserine mark is found at Ser708, Ser721, and Ser725. The tract at residues 780 to 800 is segment S9; it reads VLSGHVVVCIFGDVSSALIGL. An RCK N-terminal 2 domain is found at 782–926; the sequence is SGHVVVCIFG…MDRSSPDNSP (145 aa). Thr913 carries the post-translational modification Phosphothreonine. 2 positions are modified to phosphoserine: Ser921 and Ser925. Residues 946–968 carry the Calcium bowl motif; the sequence is TELVNDTNVQFLDQDDDDDPDTE. Gln955, Asp958, Asp961, and Asp963 together coordinate Ca(2+). Residues 975–995 are segment S10; sequence FACGTAFAVSVLDSLMSATYF. Low complexity predominate over residues 1129–1154; sequence RASLSHSSHSSQSSSKKSSSVHSIPS. The tract at residues 1129-1179 is disordered; that stretch reads RASLSHSSHSSQSSSKKSSSVHSIPSTANRQNRPKSRESRDKQKYVQEERL. Positions 1163 to 1179 are enriched in basic and acidic residues; that stretch reads KSRESRDKQKYVQEERL. 2 positions are modified to phosphoserine: Ser1164 and Ser1167.

Belongs to the potassium channel family. Calcium-activated (TC 1.A.1.3) subfamily. KCa1.1/KCNMA1 sub-subfamily. In terms of assembly, homotetramer; which constitutes the calcium-activated potassium channel. Interacts with beta subunits KCNMB1, KCNMB2, KCNMB3 and KCNMB4. Interacts with gamma subunits LRRC26, LRRC38, LRRC52 and LRRC55. Beta and gamma subunits are accessory, and modulate its activity. Interacts with RAB11B. Post-translationally, phosphorylated. Phosphorylation by kinases such as PKA and/or PKG. In smooth muscles, phosphorylation affects its activity. In terms of processing, palmitoylation by ZDHHC22 and ZDHHC23 within the intracellular linker between the S0 and S1 transmembrane domains regulates localization to the plasma membrane. Depalmitoylated by LYPLA1 and LYPLAL1, leading to retard exit from the trans-Golgi network.

It is found in the cell membrane. It localises to the endoplasmic reticulum membrane. The enzyme catalyses K(+)(in) = K(+)(out). Its activity is regulated as follows. Ethanol and carbon monoxide-bound heme increase channel activation. Heme inhibits channel activation. Functionally, potassium channel activated by both membrane depolarization or increase in cytosolic Ca(2+) that mediates export of K(+). It is also activated by the concentration of cytosolic Mg(2+). Its activation dampens the excitatory events that elevate the cytosolic Ca(2+) concentration and/or depolarize the cell membrane. It therefore contributes to repolarization of the membrane potential. Plays a key role in controlling excitability in a number of systems, such as regulation of the contraction of smooth muscle, the tuning of hair cells in the cochlea, regulation of transmitter release, and innate immunity. In smooth muscles, its activation by high level of Ca(2+), caused by ryanodine receptors in the sarcoplasmic reticulum, regulates the membrane potential. In cochlea cells, its number and kinetic properties partly determine the characteristic frequency of each hair cell and thereby helps to establish a tonotopic map. Kinetics of KCNMA1 channels are determined by alternative splicing, phosphorylation status and its combination with modulating beta subunits. Highly sensitive to both iberiotoxin (IbTx) and charybdotoxin (CTX). Potassium channel activated by both membrane depolarization or increase in cytosolic Ca(2+) that mediates export of K(+). The protein is Calcium-activated potassium channel subunit alpha-1 (KCNMA1) of Oryctolagus cuniculus (Rabbit).